The following is an 870-amino-acid chain: DNA mismatch repair protein MutS (870 aa).

620 to 627 (GPNMAGKS) is an ATP binding site.

It belongs to the DNA mismatch repair MutS family.

This protein is involved in the repair of mismatches in DNA. It is possible that it carries out the mismatch recognition step. This protein has a weak ATPase activity. The chain is DNA mismatch repair protein MutS from Acetivibrio thermocellus (strain ATCC 27405 / DSM 1237 / JCM 9322 / NBRC 103400 / NCIMB 10682 / NRRL B-4536 / VPI 7372) (Clostridium thermocellum).